Consider the following 682-residue polypeptide: Transcription factor 12 (682 aa).

The 9aaTAD signature appears at 19–27 (DLLDFSAMF). Disordered regions lie at residues 25–122 (AMFS…LYSR), 140–219 (LGSP…PPTS), and 281–313 (SVSP…ASHT). Composition is skewed to polar residues over residues 30–48 (PVNS…QFSG) and 56–76 (GTTS…SRGF). 3 positions are modified to phosphoserine: Ser-47, Ser-67, and Ser-79. The span at 81–93 (HYSDHLNDSRLGA) shows a compositional bias: basic and acidic residues. Residue Ser-98 is modified to Phosphoserine. Composition is skewed to polar residues over residues 101–121 (PFMN…SLYS) and 144–163 (AQLS…SATS). Residue Lys-110 forms a Glycyl lysine isopeptide (Lys-Gly) (interchain with G-Cter in SUMO2) linkage. The residue at position 116 (Ser-116) is a Phosphoserine. The interval 119–140 (LYSRDTGLPGCQSSLLRQDLGL) is leucine-zipper. Lys-181 participates in a covalent cross-link: Glycyl lysine isopeptide (Lys-Gly) (interchain with G-Cter in SUMO2). Residues 182 to 196 (KVRKVPPGLPSSVYA) are interaction with RUNX1T1. The span at 282–306 (VSPTDINTSLPPMSSFHRGSTSSSP) shows a compositional bias: polar residues. A Phosphothreonine modification is found at Thr-313. Residue Ser-333 is modified to Phosphoserine. 2 disordered regions span residues 349 to 395 (PDHT…SLHS) and 462 to 580 (SASM…ERRM). The segment covering 352–363 (TSSSFPSNPSTP) has biased composition (low complexity). Composition is skewed to polar residues over residues 364-376 (VGSP…TSQW) and 383-395 (APSS…SLHS). A compositionally biased stretch (low complexity) spans 481–492 (SVLSSTVTTSST). The segment covering 506–517 (LQSQSGTVVTTE) has biased composition (polar residues). Composition is skewed to basic and acidic residues over residues 518–530 (IKTE…ENLH) and 536–551 (DDMK…DIKV). Lys-519 is covalently cross-linked (Glycyl lysine isopeptide (Lys-Gly) (interchain with G-Cter in SUMO2)). Phosphoserine is present on Ser-540. Lys-550 participates in a covalent cross-link: Glycyl lysine isopeptide (Lys-Gly) (interchain with G-Cter in SUMO2). Thr-557 carries the phosphothreonine modification. Phosphoserine is present on residues Ser-558 and Ser-559. Residues 568-580 (PEQKIEREKERRM) show a composition bias toward basic and acidic residues. Residues 577 to 630 (ERRMANNARERLRVRDINEAFKELGRMCQLHLKSEKPQTKLLILHQAVAVILSL) form the bHLH domain. Glycyl lysine isopeptide (Lys-Gly) (interchain with G-Cter in SUMO2) cross-links involve residues Lys-609 and Lys-653. A class A specific domain region spans residues 632–655 (QQVRERNLNPKAACLKRREEEKVS). Residues 651-682 (EEKVSAVSAEPPTTLPGTHPGLSETTNPMGHM) are disordered. A compositionally biased stretch (low complexity) spans 661-672 (PPTTLPGTHPGL). Over residues 673-682 (SETTNPMGHM) the composition is skewed to polar residues.

Efficient DNA binding requires dimerization with another bHLH protein. Forms homo- or heterooligomers with myogenin, E12 and ITF2 proteins. Interacts with PTF1A. Interacts with NEUROD2. Interacts with RUNX1T1. Interacts with AML1-MTG8/ETO (via nervy homology region 2 in oligomerized form). Interacts with BHLHA9. Expressed in several tissues and cell types including skeletal muscle, thymus, and a B-cell line.

The protein localises to the nucleus. Transcriptional regulator. Involved in the initiation of neuronal differentiation. Activates transcription by binding to the E box (5'-CANNTG-3'). May be involved in the functional network that regulates the development of the GnRH axis. This is Transcription factor 12 (TCF12) from Homo sapiens (Human).